We begin with the raw amino-acid sequence, 377 residues long: Pulmonary surfactant-associated protein B (377 aa).

A signal peptide spans 1–22; sequence MAKSHLLQWLLLLPTLCCPGAA. A propeptide spanning residues 23–191 is cleaved from the precursor; that stretch reads ITSASSLECA…PHTQDFSEQQ (169 aa). One can recognise a Saposin A-type domain in the interval 24 to 64; it reads TSASSLECAQGPQFWCQSLEHAVQCRALGHCLQEVWGHAGA. 3 Saposin B-type domains span residues 64–146, 195–272, and 291–366; these read ANDL…PRGQ, PLPF…STED, and QDTE…EAPA. 9 disulfides stabilise this stretch: Cys-68–Cys-142, Cys-71–Cys-136, Cys-99–Cys-111, Cys-199–Cys-268, Cys-202–Cys-262, Cys-226–Cys-237, Cys-295–Cys-362, Cys-298–Cys-356, and Cys-321–Cys-331. A propeptide spanning residues 271–377 is cleaved from the precursor; the sequence is EDAMGPALPA…PLQCFQTPHL (107 aa). N-linked (GlcNAc...) asparagine glycosylation is present at Asn-307.

As to quaternary structure, homodimer; disulfide-linked.

It is found in the secreted. The protein resides in the extracellular space. It localises to the surface film. In terms of biological role, pulmonary surfactant-associated proteins promote alveolar stability by lowering the surface tension at the air-liquid interface in the peripheral air spaces. SP-B increases the collapse pressure of palmitic acid to nearly 70 millinewtons per meter. This chain is Pulmonary surfactant-associated protein B (Sftpb), found in Mus musculus (Mouse).